We begin with the raw amino-acid sequence, 494 residues long: Aspartyl/glutamyl-tRNA(Asn/Gln) amidotransferase subunit B (494 aa).

The protein belongs to the GatB/GatE family. GatB subfamily. Heterotrimer of A, B and C subunits.

It catalyses the reaction L-glutamyl-tRNA(Gln) + L-glutamine + ATP + H2O = L-glutaminyl-tRNA(Gln) + L-glutamate + ADP + phosphate + H(+). The catalysed reaction is L-aspartyl-tRNA(Asn) + L-glutamine + ATP + H2O = L-asparaginyl-tRNA(Asn) + L-glutamate + ADP + phosphate + 2 H(+). Functionally, allows the formation of correctly charged Asn-tRNA(Asn) or Gln-tRNA(Gln) through the transamidation of misacylated Asp-tRNA(Asn) or Glu-tRNA(Gln) in organisms which lack either or both of asparaginyl-tRNA or glutaminyl-tRNA synthetases. The reaction takes place in the presence of glutamine and ATP through an activated phospho-Asp-tRNA(Asn) or phospho-Glu-tRNA(Gln). This Rhodopseudomonas palustris (strain BisB5) protein is Aspartyl/glutamyl-tRNA(Asn/Gln) amidotransferase subunit B.